The primary structure comprises 343 residues: N-acetyl-gamma-glutamyl-phosphate reductase (343 aa).

Residue cysteine 148 is part of the active site.

It belongs to the NAGSA dehydrogenase family. Type 1 subfamily.

The protein localises to the cytoplasm. It carries out the reaction N-acetyl-L-glutamate 5-semialdehyde + phosphate + NADP(+) = N-acetyl-L-glutamyl 5-phosphate + NADPH + H(+). It functions in the pathway amino-acid biosynthesis; L-arginine biosynthesis; N(2)-acetyl-L-ornithine from L-glutamate: step 3/4. In terms of biological role, catalyzes the NADPH-dependent reduction of N-acetyl-5-glutamyl phosphate to yield N-acetyl-L-glutamate 5-semialdehyde. The protein is N-acetyl-gamma-glutamyl-phosphate reductase of Caldicellulosiruptor bescii (strain ATCC BAA-1888 / DSM 6725 / KCTC 15123 / Z-1320) (Anaerocellum thermophilum).